The chain runs to 74 residues: Small ribosomal subunit protein bS18 (74 aa).

This sequence belongs to the bacterial ribosomal protein bS18 family. Part of the 30S ribosomal subunit. Forms a tight heterodimer with protein bS6.

Binds as a heterodimer with protein bS6 to the central domain of the 16S rRNA, where it helps stabilize the platform of the 30S subunit. In Coprothermobacter proteolyticus (strain ATCC 35245 / DSM 5265 / OCM 4 / BT), this protein is Small ribosomal subunit protein bS18.